Consider the following 658-residue polypeptide: Sodium/nucleoside cotransporter 1 (658 aa).

The Cytoplasmic segment spans residues 1–75 (MEKASGRKSL…ARTFCQRHAS (75 aa)). A helical membrane pass occupies residues 76-99 (LFKKILLGLLCLAYAAYFLAACIL). Residues 100–104 (DFQRA) lie on the Extracellular side of the membrane. A helical membrane pass occupies residues 105–123 (LALFVITCLVILVLLLHFL). Over 124–142 (KKFLGKKLTRCLKPFKNSQ) the chain is Cytoplasmic. A helical transmembrane segment spans residues 143 to 162 (LRLWIKRVFAGVSLVGLILW). Residues 163–173 (LALDTAQRPEQ) lie on the Extracellular side of the membrane. Residues 174–190 (LISFAGICMFVLILFAC) traverse the membrane as a helical segment. The Cytoplasmic portion of the chain corresponds to 191–196 (SKHHSA). Residues 197-217 (VSWRTVFWGLGLQFVFGLLVI) traverse the membrane as a helical segment. Over 218–256 (RTDPGFIAFQWLGDQVQIFLAYTVAGSSFVLGDTLVNDV) the chain is Extracellular. Residues 257–278 (FAFQSLPIIIFFGCVMSILYYL) form a helical membrane-spanning segment. Over 279–289 (GLVQWVVQKIA) the chain is Cytoplasmic. The helical transmembrane segment at 290–313 (WFLQVTMRTTATETLAVAGNIFVG) threads the bilayer. Over 314-332 (MTEAPLLIRPYLADLTLSE) the chain is Extracellular. The chain crosses the membrane as a helical span at residues 333-355 (IHAVMTSGFATISGTVLGAFISF). Residues 356–361 (GIDASS) lie on the Cytoplasmic side of the membrane. A helical membrane pass occupies residues 362–381 (LISASVMGAPCALALSKLVY). Residues 382–418 (PEEEESKFKSKEGVKLPRGKESNVLEAASNGATDAIA) are Extracellular-facing. Residues 419–441 (LVANVAANLVAFLAVLAFINAAL) traverse the membrane as a helical segment. The Cytoplasmic segment spans residues 442-452 (SWLGELVDIQG). A helical transmembrane segment spans residues 453–474 (LTFQVICSYILRPMVYMMGVEW). Residues 475 to 529 (TDCPMVAEMVGIKFFTNEFVAYQQLSQYKKKRLSGMEEWIDGQKQWISVRAEVIT) lie on the Extracellular side of the membrane. The helical transmembrane segment at 530–553 (TFSLCGFANLSSIGITLGGLTSMV) threads the bilayer. Over 554 to 564 (PHRKSDLSKVV) the chain is Cytoplasmic. The helical transmembrane segment at 565-587 (IRALFTGSCVSFISACVAGILYV) threads the bilayer. At 588 to 658 (PRGAETDCVS…CGFYNNTVCA (71 aa)) the chain is on the extracellular side. Asn-653 carries N-linked (GlcNAc...) asparagine glycosylation.

This sequence belongs to the concentrative nucleoside transporter (CNT) (TC 2.A.41) family. N-glycosylated. N-glycosylation is required for localization to the plasma membrane and the transporter activity.

Its subcellular location is the cell membrane. It is found in the apical cell membrane. The enzyme catalyses uridine(out) + Na(+)(out) = uridine(in) + Na(+)(in). It carries out the reaction thymidine(out) + Na(+)(out) = thymidine(in) + Na(+)(in). It catalyses the reaction cytidine(out) + Na(+)(out) = cytidine(in) + Na(+)(in). The catalysed reaction is adenosine(out) + Na(+)(out) = adenosine(in) + Na(+)(in). Its activity is regulated as follows. Due to its high apparent affinity but slow transport, adenosine could act as a negative regulator of pyrimidine transport under some conditions. Sodium and pyrimidine nucleoside symporter of the plasma membrane that imports uridine, thymidine and cytidine into cells by coupling their transport to the transmembrane sodium electrochemical gradient. Also transports adenosine, an atypical substrate transported with high apparent affinity, but low maximum velocity. Therefore, exhibits the transport characteristics of the nucleoside transport system cit or N2 subtype (N2/cit). Involved in renal nucleoside (re)absorption. This Oryctolagus cuniculus (Rabbit) protein is Sodium/nucleoside cotransporter 1 (SLC28A1).